We begin with the raw amino-acid sequence, 614 residues long: Adenylate kinase 7 (614 aa).

Residues 258–503 (PIKICILGPP…KEIGKPRNYG (246 aa)) are adenylate kinase. 268–273 (AVGKSS) is a binding site for ATP. Residues 288 to 346 (KMKDVIAEAIAKLEAIVAPKDSVEGEEEGEEEEEEENVDDAQELLDGIKESMEQNAGRL) are NMP. The tract at residues 308–327 (DSVEGEEEGEEEEEEENVDD) is disordered. Over residues 311 to 327 (EGEEEGEEEEEEENVDD) the composition is skewed to acidic residues. AMP contacts are provided by residues 323–346 (ENVDDAQELLDGIKESMEQNAGRL), 373–376 (GFPK), and Q380. A coiled-coil region spans residues 376–568 (KTYDQAKDLF…EERELLEVQS (193 aa)). Residues 428–438 (NLPESVVAGTH) are LID. R446 lines the AMP pocket. G478 contacts ATP. The DPY-30 stretch occupies residues 570–614 (PLRNYLMTYVMPTLMQGLNECCKVRPEDPVDFLAEYLFKNNPEMQ).

In the central section; belongs to the adenylate kinase family. This sequence in the C-terminal section; belongs to the dpy-30 family.

Its subcellular location is the cytoplasm. The protein resides in the cytosol. The protein localises to the cell projection. It localises to the cilium. It is found in the flagellum. It carries out the reaction AMP + ATP = 2 ADP. The enzyme catalyses a 2'-deoxyribonucleoside 5'-diphosphate + ATP = a 2'-deoxyribonucleoside 5'-triphosphate + ADP. The catalysed reaction is a ribonucleoside 5'-diphosphate + ATP = a ribonucleoside 5'-triphosphate + ADP. Nucleoside monophosphate (NMP) kinase that catalyzes the reversible transfer of the terminal phosphate group between nucleoside triphosphates and monophosphates. Has highest activity toward AMP, and weaker activity toward dAMP, CMP and dCMP. Also displays broad nucleoside diphosphate kinase activity. Involved in maintaining ciliary structure and function. This is Adenylate kinase 7 (Ak7) from Mus musculus (Mouse).